A 286-amino-acid polypeptide reads, in one-letter code: Pantothenate synthetase (286 aa).

ATP is bound at residue 30–37 (MGYFHEGH). His-37 serves as the catalytic Proton donor. Gln-61 contacts (R)-pantoate. Gln-61 serves as a coordination point for beta-alanine. 147 to 150 (GKKD) contacts ATP. Gln-153 contributes to the (R)-pantoate binding site. 184 to 187 (MSSR) serves as a coordination point for ATP.

Belongs to the pantothenate synthetase family. As to quaternary structure, homodimer.

It localises to the cytoplasm. The enzyme catalyses (R)-pantoate + beta-alanine + ATP = (R)-pantothenate + AMP + diphosphate + H(+). Its pathway is cofactor biosynthesis; (R)-pantothenate biosynthesis; (R)-pantothenate from (R)-pantoate and beta-alanine: step 1/1. Catalyzes the condensation of pantoate with beta-alanine in an ATP-dependent reaction via a pantoyl-adenylate intermediate. The polypeptide is Pantothenate synthetase (Syntrophus aciditrophicus (strain SB)).